The sequence spans 251 residues: Ubiquitin-conjugating enzyme E2 22 (251 aa).

One can recognise a UBC core domain in the interval 10-156; that stretch reads NVIKQLAKEL…ARLYTGIHAK (147 aa). Residue Cys94 is the Glycyl thioester intermediate of the active site. Residues 230–240 are compositionally biased toward basic and acidic residues; that stretch reads GLAKVQADKKK. The disordered stretch occupies residues 230–251; sequence GLAKVQADKKKVDARKKSLKRL. Residues 230-251 are a coiled coil; it reads GLAKVQADKKKVDARKKSLKRL. Positions 241–251 are enriched in basic residues; the sequence is VDARKKSLKRL.

Belongs to the ubiquitin-conjugating enzyme family. Post-translationally, self-ubiquitinated. As to expression, expressed in seeds, pistils, siliques, hypocotyls and leaves.

The enzyme catalyses S-ubiquitinyl-[E1 ubiquitin-activating enzyme]-L-cysteine + [E2 ubiquitin-conjugating enzyme]-L-cysteine = [E1 ubiquitin-activating enzyme]-L-cysteine + S-ubiquitinyl-[E2 ubiquitin-conjugating enzyme]-L-cysteine.. Its pathway is protein modification; protein ubiquitination. Functionally, accepts the ubiquitin from the E1 complex and catalyzes its covalent attachment to other proteins. This chain is Ubiquitin-conjugating enzyme E2 22 (UBC22), found in Arabidopsis thaliana (Mouse-ear cress).